Here is a 206-residue protein sequence, read N- to C-terminus: N-(5'-phosphoribosyl)anthranilate isomerase (206 aa).

The protein belongs to the TrpF family.

The catalysed reaction is N-(5-phospho-beta-D-ribosyl)anthranilate = 1-(2-carboxyphenylamino)-1-deoxy-D-ribulose 5-phosphate. Its pathway is amino-acid biosynthesis; L-tryptophan biosynthesis; L-tryptophan from chorismate: step 3/5. This chain is N-(5'-phosphoribosyl)anthranilate isomerase, found in Pseudomonas putida (strain W619).